Reading from the N-terminus, the 555-residue chain is Inositol 1,4,5-trisphosphate receptor-interacting protein-like 1 (555 aa).

The N-terminal stretch at Met-1 to His-24 is a signal peptide. At His-25–Gly-103 the chain is on the extracellular side. Positions Leu-38–Asn-74 form a coiled coil. A helical transmembrane segment spans residues Pro-104 to Phe-124. Topologically, residues Glu-125 to Pro-555 are cytoplasmic.

Belongs to the ITPRIP family. Expressed in testis and tumoral cells.

The protein localises to the cell membrane. Its function is as follows. Functions as a ligand of CD3E, inhibiting TCR-CD3 complex signaling to regulate T cell activation. Induces stable CD3E-NCK1 binding, thereby preventing the CD3E-ZAP70 interaction and subsequently inhibiting the activation of the downstream ERK-NFkB signaling cascade and calcium influx. This Homo sapiens (Human) protein is Inositol 1,4,5-trisphosphate receptor-interacting protein-like 1.